We begin with the raw amino-acid sequence, 574 residues long: MYND-type zinc finger protein C31F10.10c (574 aa).

Disordered stretches follow at residues Asp207–Arg253 and Met283–Asp307. 2 stretches are compositionally biased toward polar residues: residues Ile243–Arg253 and Met283–Thr301. Residues Asn482–Cys523 form an MYND-type; degenerate zinc finger. The Zn(2+) site is built by Cys498, Cys501, His519, and Cys523. The tract at residues Lys534 to Leu574 is disordered. Residues Ser542–Val556 show a composition bias toward low complexity. Residues Glu562–Leu574 are compositionally biased toward polar residues.

Belongs to the MUB1/samB family.

The protein localises to the nucleus. It localises to the cytoplasm. It is found in the cytoskeleton. Its subcellular location is the microtubule organizing center. The protein resides in the spindle pole body. This is MYND-type zinc finger protein C31F10.10c from Schizosaccharomyces pombe (strain 972 / ATCC 24843) (Fission yeast).